Here is a 757-residue protein sequence, read N- to C-terminus: LPS-assembly protein LptD (757 aa).

A signal peptide spans 1–21; that stretch reads MRRLIPIAITGSLLWGAAVQA.

The protein belongs to the LptD family. As to quaternary structure, component of the lipopolysaccharide transport and assembly complex. Interacts with LptE and LptA.

Its subcellular location is the cell outer membrane. Functionally, together with LptE, is involved in the assembly of lipopolysaccharide (LPS) at the surface of the outer membrane. The polypeptide is LPS-assembly protein LptD (Alkalilimnicola ehrlichii (strain ATCC BAA-1101 / DSM 17681 / MLHE-1)).